A 153-amino-acid polypeptide reads, in one-letter code: MVVKAVCVINGDAKGTVFFEQEGEGCPVKVTGEVTGLAKGQHGFHVHEFGDNTNGCMSSGPHFNPYQKEHGAPTDENRHLGDLGNIIANGDGPTPVNICDCKITLLGANSIIGRTVVVHADPDDLGKGGHELSKTTGNAGARIGCGVIGIAKI.

Residues H45, H47, and H62 each contribute to the Cu cation site. C56 and C145 are joined by a disulfide. Zn(2+)-binding residues include H62, H70, H79, and D82. A Cu cation-binding site is contributed by H119.

It belongs to the Cu-Zn superoxide dismutase family. As to quaternary structure, homodimer. Requires Cu cation as cofactor. Zn(2+) serves as cofactor.

It is found in the cytoplasm. The enzyme catalyses 2 superoxide + 2 H(+) = H2O2 + O2. In terms of biological role, destroys radicals which are normally produced within the cells and which are toxic to biological systems. The sequence is that of Superoxide dismutase [Cu-Zn] from Drosophila virilis (Fruit fly).